We begin with the raw amino-acid sequence, 87 residues long: Small ribosomal subunit protein bS20 (87 aa).

The protein belongs to the bacterial ribosomal protein bS20 family.

Its function is as follows. Binds directly to 16S ribosomal RNA. The sequence is that of Small ribosomal subunit protein bS20 from Lachnoclostridium phytofermentans (strain ATCC 700394 / DSM 18823 / ISDg) (Clostridium phytofermentans).